A 168-amino-acid chain; its full sequence is Transmembrane protein 229b (168 aa).

The Cytoplasmic portion of the chain corresponds to 1–14; that stretch reads MAPPEPLTALSRWY. A helical transmembrane segment spans residues 15–35; that stretch reads LYAIHGYFCEVMFTAAWDFVV. Residues 36-40 are Extracellular-facing; the sequence is NYNWK. Residues 41-61 form a helical membrane-spanning segment; sequence FPGVTSVWALFIYGTSILIVE. Residues 62–72 lie on the Cytoplasmic side of the membrane; sequence KMYLYLKDKCN. Residues 73–93 form a helical membrane-spanning segment; sequence ILIRCLIYTLWTYIWEFSTGL. The Extracellular portion of the chain corresponds to 94-109; the sequence is ILRQFNACPWDYSQFD. Residues 110-130 form a helical membrane-spanning segment; the sequence is FDFMGLITLEYAIPWFCASFI. Over 131–168 the chain is Cytoplasmic; the sequence is MEQLVIRNTLRLRFDEHAEPGSPVMSTVSMANGHVKCN.

It belongs to the TMEM229 family.

The protein resides in the membrane. The chain is Transmembrane protein 229b (tmem229b) from Xenopus tropicalis (Western clawed frog).